The primary structure comprises 153 residues: Holo-[acyl-carrier-protein] synthase (153 aa).

Residues D24 and E78 each coordinate Mg(2+).

This sequence belongs to the P-Pant transferase superfamily. AcpS family. The cofactor is Mg(2+).

It is found in the cytoplasm. The enzyme catalyses apo-[ACP] + CoA = holo-[ACP] + adenosine 3',5'-bisphosphate + H(+). Transfers the 4'-phosphopantetheine moiety from coenzyme A to a Ser of acyl-carrier-protein. In Bordetella parapertussis (strain 12822 / ATCC BAA-587 / NCTC 13253), this protein is Holo-[acyl-carrier-protein] synthase.